Here is a 387-residue protein sequence, read N- to C-terminus: Mannitol-1-phosphate 5-dehydrogenase (387 aa).

3–14 (ALHFGAGNIGRG) lines the NAD(+) pocket.

The protein belongs to the mannitol dehydrogenase family.

It carries out the reaction D-mannitol 1-phosphate + NAD(+) = beta-D-fructose 6-phosphate + NADH + H(+). The chain is Mannitol-1-phosphate 5-dehydrogenase from Yersinia pestis bv. Antiqua (strain Antiqua).